Consider the following 440-residue polypeptide: Thymidine phosphorylase (440 aa).

It belongs to the thymidine/pyrimidine-nucleoside phosphorylase family. Homodimer.

The catalysed reaction is thymidine + phosphate = 2-deoxy-alpha-D-ribose 1-phosphate + thymine. Its pathway is pyrimidine metabolism; dTMP biosynthesis via salvage pathway; dTMP from thymine: step 1/2. The enzymes which catalyze the reversible phosphorolysis of pyrimidine nucleosides are involved in the degradation of these compounds and in their utilization as carbon and energy sources, or in the rescue of pyrimidine bases for nucleotide synthesis. This Shigella boydii serotype 4 (strain Sb227) protein is Thymidine phosphorylase.